A 286-amino-acid polypeptide reads, in one-letter code: Perivitellin-2 31 kDa subunit (286 aa).

The N-terminal stretch at Met-1–Ala-30 is a signal peptide. Asn-101 carries N-linked (GlcNAc...) asparagine glycosylation.

This sequence belongs to the tectonin family. In terms of assembly, perivitellin-2 is a dimer of heterodimers held together head-to-tail by non-covalent forces. The heterodimer is composed of the tachylectin subunit (31 kDa) and the MACPF subunit (67 kDa) that are disulfide-linked. Post-translationally, PV2 is a very high density lipoprotein (VHDL). It contains 3.75% of lipids. The major lipid classes are free sterols and phospholipids and also have significant quantities of energy-providing triacylglycerides and free fatty acids. Produced by albumen secretory cells. Found in developing eggs.

The protein resides in the secreted. It is found in the target cell membrane. Functionally, the egg defensive protein perivitellin-2 is a pore-forming two-subunit glycoprotein that affects both the nervous and digestive systems of mammals. In addition, it is a source of both structural and energetic molecules during embryonic development. The tachylectin subunit (31 kDa) binds target membranes while the MACPF subunit (67 kDa) disrupts lipid bilayers forming large pores (inner diameter of about 5.6 nm) altering the plasma membrance conductance. Both in vivo and in vitro, the protein shows wide pH range stability and is resistant to enzymatic proteolysis from gastrointestinal environments. It is cytotoxic to both epithelial and immune cells from the digestive system of mammals. It induces enterocyte death by a lytic mechanism and disrupts enterocyte monolayers in a dose-dependent manner. After oral administration to mice, it binds enterocytes and induces large dose-dependent morphological changes on their small intestine mucosa, reducing the absorptive surface. Additionally, it is detected in the Peyer's patches where it activates lymphoid follicles and triggers apoptosis. The toxin can also traverse the intestinal barrier and induce oral adaptive immunity with evidence of circulating antibody response. The toxin also shows hemagglutination properties thanks to the tachylectin subunit, but has no hemolytic activity. In addition to enterotoxin activity, the toxin also acts as a neurotoxin, since an intraperitoneal injection can induce paralysis of the mice rear limbs, followed by death. This Pomacea maculata (Giant applesnail) protein is Perivitellin-2 31 kDa subunit.